The chain runs to 338 residues: Clavatol oxidase claD (338 aa).

The 107-residue stretch at 193–299 folds into the Fe2OG dioxygenase domain; it reads DPMSLLRLLH…RYSVVFFYDG (107 aa). Fe cation-binding residues include His-222, Asp-224, and His-280. Arg-290 is a 2-oxoglutarate binding site.

The protein belongs to the iron/ascorbate-dependent oxidoreductase family. Fe(2+) serves as cofactor.

The catalysed reaction is clavatol + 2-oxoglutarate + O2 = hydroxyclavatol + succinate + CO2. The protein operates within secondary metabolite biosynthesis. In terms of biological role, 2-oxoglutarate-dependent dioxygenase; part of the cla gene cluster that produces clavatol and ortho-quinone methide. The clavatol biosynthesis cluster cla and the terrestric acid cluster tra are both involved in the production of peniphenones and penilactones. The non-reducing PKS claF is responsible for the formation of clavatol from successive condensations of 3 malonyl-CoA units, presumably with a simple acetyl-CoA starter unit, and 2 methylation steps. The esterase claE probably collaborates with claF by catalyzing the hydrolysis of ACP-bound acyl intermediates to free the ACP from stalled intermediates. The clavatol oxidase claD then converts clavatol to hydroxyclavatol. Spontaneous dehydration of hydroxyclavatol leads to the accumulation of the highly active ortho-quinone methide. On the other hand, the PKS-NRPS hybrid traA is involved in the formation of crustosic acid, with the help of traB and traD. The polyketide synthase module (PKS) of traA is responsible for the synthesis of the polyketide backbone via the condensation of an acetyl-CoA starter unit with 3 malonyl-CoA units. The downstream nonribosomal peptide synthetase (NRPS) module then amidates the carboxyl end of the polyketide with L-malic acid. Because traA lacks a designated enoylreductase (ER) domain, the required activity is provided the enoyl reductase traG. Crustosic acid undergoes decarboxylation and isomerization to the terrestric acid, catalyzed by the 2-oxoglutarate-dependent dioxygenase traH. Both acids are further converted to the 2 gamma-butyrolactones (R)-5-methyltetronic acid and (S)-5-carboxylmethyltetronic acid, with involvement of the cytochrome P450 monooxygenase claJ. Spontaneous addition of the methide to these gamma-butyrolactones leads to peniphenone D and penilactone D, which undergo again stereospecific attacking by methide to give penilactones A and B. This chain is Clavatol oxidase claD, found in Penicillium crustosum (Blue mold fungus).